Here is a 772-residue protein sequence, read N- to C-terminus: Magnetosome formation protease MamE (772 aa).

Residues 1–21 (MTMFNGDVEDGGRSNVSCGKD) are Cytoplasmic-facing. Residues 22 to 42 (LKRYLMLMGVVALVVLFGAFI) traverse the membrane as a helical segment. At 43 to 772 (YRQSSGGLRL…RNGQEFWIVL (730 aa)) the chain is on the lumenal side. Active-site charge relay system residues include His-187, Asp-220, and Ser-296. The short motif at 374 to 397 (IAAGTPSPHVDGRQNMDCSNCHDI) is the MCR (magnetochrome) 1 element. 9 residues coordinate heme: Cys-391, Cys-394, His-395, Cys-437, Cys-440, His-441, Cys-488, Cys-491, and His-492. 2 consecutive short sequence motifs (MCR) follow at residues 420-443 (IPAN…CHQF) and 470-494 (AIRA…CHQI). Positions 445 to 558 (GGAAAGPIAF…ALTPLTQRLG (114 aa)) constitute a Cytochrome c domain. PDZ domains follow at residues 522-626 (AINI…LRAG) and 696-765 (GATP…HRNG).

This sequence in the N-terminal section; belongs to the peptidase S1C family. Might interact with MamB via PDZ1. Heme serves as cofactor. Post-translationally, the protein isolated from magnetosome membranes has a molecular weight of about 36.3 kDa, probably due to C-terminal cleavage. Subject to autocatalytic cleavage; cleavage also requires MamO; these may be the same event.

It is found in the magnetosome membrane. Functionally, acts at 2 distinct steps of magnetosome formation; required for correct localization of proteins to the magnetosome while the protease activity is required for maturation of small magnetite crystals into larger, functional ones. Probably cleaves at least itself, MamO and MamP; cleavage requires the putative transprot domain of MamO. Involved in localization of some proteins (at least MamA, MamC, MamF, MamI and MamJ) to the magnetosome. One of 7 genes (mamLQBIEMO) able to induce magnetosome membrane biogenesis; coexpression of mamLQRBIEMO in a deletion of the 17 gene mamAB operon restores magnetosome vesicle formation but not magnetite biosynthesis. The sequence is that of Magnetosome formation protease MamE from Magnetospirillum gryphiswaldense (strain DSM 6361 / JCM 21280 / NBRC 15271 / MSR-1).